Consider the following 163-residue polypeptide: Nucleotide-binding protein EAT1b_2037 (163 aa).

It belongs to the YajQ family.

In terms of biological role, nucleotide-binding protein. The sequence is that of Nucleotide-binding protein EAT1b_2037 from Exiguobacterium sp. (strain ATCC BAA-1283 / AT1b).